A 146-amino-acid chain; its full sequence is Hemoglobin subunit delta (146 aa).

The Globin domain maps to 2 to 146 (HLTGDEKSAV…VATALAHKYH (145 aa)). At serine 50 the chain carries Phosphoserine. Heme b is bound by residues histidine 63 and histidine 92.

Belongs to the globin family. As to quaternary structure, heterotetramer of two delta chains and two alpha chains. As to expression, red blood cells.

The sequence is that of Hemoglobin subunit delta (HBD) from Saimiri sciureus (Common squirrel monkey).